The following is a 364-amino-acid chain: Hsp70-binding protein 1 (364 aa).

Residues 1–75 (MSDEGSRGSR…DPPPEPMSEE (75 aa)) form a disordered region. Residues 23–42 (SSGGGGGGGGGGSSSAGGSG) are compositionally biased toward gly residues. ARM repeat units follow at residues 137–179 (ENMD…TCSQ), 182–222 (AAIQ…CLVR), 225–264 (EAGL…NLLV), and 267–306 (PEHR…SLVT). 2 positions are modified to phosphoserine: serine 356 and serine 361.

As to quaternary structure, interacts with the ATP-binding domain of HSPA1A. Detected in a ternary complex containing STUB1, HSPA1A and HSPBP1. Interacts with PGLYRP1; this interaction blocks the cytotoxic activity of the PGLYRP1-HSPA1A complex.

Inhibits HSPA1A chaperone activity by changing the conformation of the ATP-binding domain of HSPA1A and interfering with ATP binding. Interferes with ubiquitination mediated by STUB1 and inhibits chaperone-assisted degradation of target proteins. The sequence is that of Hsp70-binding protein 1 (HSPBP1) from Macaca fascicularis (Crab-eating macaque).